A 575-amino-acid chain; its full sequence is uncharacterized protein (575 aa).

Residues 507-536 (AHRKVGELNNKKPMTGEKPPPKNKKSPKYK) are disordered.

This is an uncharacterized protein from Ostreid herpesvirus 1 (isolate France) (OsHV-1).